The following is a 262-amino-acid chain: Adenosylcobinamide-GDP ribazoletransferase (262 aa).

4 helical membrane passes run 43 to 63 (PLAG…LGAI), 121 to 141 (VALI…LPLL), 145 to 165 (GGGV…VWHW), and 195 to 215 (GVIL…AVLL).

Belongs to the CobS family. Mg(2+) serves as cofactor.

The protein resides in the cell inner membrane. The enzyme catalyses alpha-ribazole + adenosylcob(III)inamide-GDP = adenosylcob(III)alamin + GMP + H(+). It catalyses the reaction alpha-ribazole 5'-phosphate + adenosylcob(III)inamide-GDP = adenosylcob(III)alamin 5'-phosphate + GMP + H(+). It functions in the pathway cofactor biosynthesis; adenosylcobalamin biosynthesis; adenosylcobalamin from cob(II)yrinate a,c-diamide: step 7/7. Joins adenosylcobinamide-GDP and alpha-ribazole to generate adenosylcobalamin (Ado-cobalamin). Also synthesizes adenosylcobalamin 5'-phosphate from adenosylcobinamide-GDP and alpha-ribazole 5'-phosphate. This Sinorhizobium medicae (strain WSM419) (Ensifer medicae) protein is Adenosylcobinamide-GDP ribazoletransferase.